We begin with the raw amino-acid sequence, 459 residues long: DNA primase large subunit (459 aa).

Cys-291, Cys-369, Cys-386, and Cys-428 together coordinate [4Fe-4S] cluster.

Belongs to the eukaryotic-type primase large subunit family. As to quaternary structure, heterodimer of a catalytic subunit spp1/pri1 and a regulatory subunit spp2/pri2, also known as the DNA primase complex. Component of the alpha DNA polymerase complex (also known as the alpha DNA polymerase-primase complex) consisting of four subunits: the catalytic subunit pol1, the accessory subunit spb70/pol12, and the primase complex subunits spp1/pri1 and spp2/pri2 respectively. Interacts with orc2; preferentially associates with the unphosphorylated orc2 in G1 pre-Start prior to orc2 being phosphorylated by cdc2, the interaction is mediated by spb70 and might enable the association of the whole alpha DNA polymerase complex to orc2/spb70 complex on chromatin. Requires [4Fe-4S] cluster as cofactor.

It localises to the nucleus. The protein localises to the chromosome. Regulatory subunit of the DNA primase complex and component of the DNA polymerase alpha complex (also known as the alpha DNA polymerase-primase complex - primosome/replisome) which play an essential role in the initiation of DNA synthesis. During the S phase of the cell cycle, the DNA polymerase alpha complex (composed of a catalytic subunit pol1, an accessory subunit spb70/pol12 and two primase subunits, the catalytic subunit spp1/pri1 and the regulatory subunit spp2/pri2) is recruited to DNA at the replicative forks. The primase subunit of the polymerase alpha complex initiates DNA synthesis by oligomerising short RNA primers on both leading and lagging strands. The chain is DNA primase large subunit from Schizosaccharomyces pombe (strain 972 / ATCC 24843) (Fission yeast).